A 76-amino-acid polypeptide reads, in one-letter code: Acyl carrier protein (76 aa).

In terms of domain architecture, Carrier spans 1–76 (MATFDDVKDV…AAIDYIESKQ (76 aa)). S36 carries the post-translational modification O-(pantetheine 4'-phosphoryl)serine.

The protein belongs to the acyl carrier protein (ACP) family. In terms of processing, 4'-phosphopantetheine is transferred from CoA to a specific serine of apo-ACP by AcpS. This modification is essential for activity because fatty acids are bound in thioester linkage to the sulfhydryl of the prosthetic group.

The protein localises to the cytoplasm. It participates in lipid metabolism; fatty acid biosynthesis. In terms of biological role, carrier of the growing fatty acid chain in fatty acid biosynthesis. This is Acyl carrier protein from Deinococcus deserti (strain DSM 17065 / CIP 109153 / LMG 22923 / VCD115).